We begin with the raw amino-acid sequence, 528 residues long: Phosphoenolpyruvate carboxykinase (ATP) (528 aa).

Substrate-binding residues include arginine 56, tyrosine 192, and lysine 198. ATP-binding positions include lysine 198, histidine 217, and 233–241 (GLSGTGKTT). Residues lysine 198 and histidine 217 each coordinate Mn(2+). Position 254 (aspartate 254) interacts with Mn(2+). Residues glutamate 282, arginine 319, and threonine 444 each coordinate ATP. Arginine 319 is a binding site for substrate.

The protein belongs to the phosphoenolpyruvate carboxykinase (ATP) family. The cofactor is Mn(2+).

Its subcellular location is the cytoplasm. The catalysed reaction is oxaloacetate + ATP = phosphoenolpyruvate + ADP + CO2. Its pathway is carbohydrate biosynthesis; gluconeogenesis. Involved in the gluconeogenesis. Catalyzes the conversion of oxaloacetate (OAA) to phosphoenolpyruvate (PEP) through direct phosphoryl transfer between the nucleoside triphosphate and OAA. The chain is Phosphoenolpyruvate carboxykinase (ATP) from Bacillus cereus (strain G9842).